The following is a 168-amino-acid chain: Sensor histidine kinase component HK1 (168 aa).

The Histidine kinase; second part domain occupies 1–141 (MPITPLLHES…ELRITLPTPR (141 aa)). Positions 137–168 (LPTPRPPFHEELPRITSSDTKDPNREHDTSDQ) are disordered. Over residues 143–168 (PFHEELPRITSSDTKDPNREHDTSDQ) the composition is skewed to basic and acidic residues.

Interacts with HK2.

The catalysed reaction is ATP + protein L-histidine = ADP + protein N-phospho-L-histidine.. Its function is as follows. Member of the three-protein two-component system HK1/HK2/TcrA. Kinase that binds ATP and catalyzes the transfer of a phosphoryl group from ATP to HK2. This chain is Sensor histidine kinase component HK1, found in Mycobacterium tuberculosis (strain ATCC 25618 / H37Rv).